The sequence spans 465 residues: Soluble pyridine nucleotide transhydrogenase (465 aa).

Position 36 to 45 (36 to 45 (ERYNNVGGGC)) interacts with FAD.

This sequence belongs to the class-I pyridine nucleotide-disulfide oxidoreductase family. FAD serves as cofactor.

The protein resides in the cytoplasm. It catalyses the reaction NAD(+) + NADPH = NADH + NADP(+). Conversion of NADPH, generated by peripheral catabolic pathways, to NADH, which can enter the respiratory chain for energy generation. This Serratia proteamaculans (strain 568) protein is Soluble pyridine nucleotide transhydrogenase.